Consider the following 271-residue polypeptide: tRNA (guanine-N(7)-)-methyltransferase (271 aa).

Positions 1–52 (MSDSHHTPEAASASLRHVRAKGEPRFPDGPKADPAGSHFERRIRSFQPRRSR) are disordered. A compositionally biased stretch (basic and acidic residues) spans 20-31 (AKGEPRFPDGPK). Residues Glu-93, Asp-118, Asp-145, and Asp-168 each coordinate S-adenosyl-L-methionine. Residue Asp-168 is part of the active site. Residues Lys-172, Asp-204, and 241-244 (TRFE) each bind substrate.

This sequence belongs to the class I-like SAM-binding methyltransferase superfamily. TrmB family.

The catalysed reaction is guanosine(46) in tRNA + S-adenosyl-L-methionine = N(7)-methylguanosine(46) in tRNA + S-adenosyl-L-homocysteine. The protein operates within tRNA modification; N(7)-methylguanine-tRNA biosynthesis. Catalyzes the formation of N(7)-methylguanine at position 46 (m7G46) in tRNA. The sequence is that of tRNA (guanine-N(7)-)-methyltransferase from Streptomyces coelicolor (strain ATCC BAA-471 / A3(2) / M145).